A 208-amino-acid polypeptide reads, in one-letter code: Ribosome maturation factor RimP (208 aa).

Positions 175–208 are disordered; it reads GEDVEDLVADPGADDELDELDELDELDDGDEDEQ. Acidic residues predominate over residues 177 to 208; that stretch reads DVEDLVADPGADDELDELDELDELDDGDEDEQ.

It belongs to the RimP family.

Its subcellular location is the cytoplasm. Its function is as follows. Required for maturation of 30S ribosomal subunits. The polypeptide is Ribosome maturation factor RimP (Kineococcus radiotolerans (strain ATCC BAA-149 / DSM 14245 / SRS30216)).